We begin with the raw amino-acid sequence, 347 residues long: N-acetyl-gamma-glutamyl-phosphate reductase (347 aa).

The active site involves Cys153.

It belongs to the NAGSA dehydrogenase family. Type 1 subfamily.

The protein localises to the cytoplasm. The catalysed reaction is N-acetyl-L-glutamate 5-semialdehyde + phosphate + NADP(+) = N-acetyl-L-glutamyl 5-phosphate + NADPH + H(+). It functions in the pathway amino-acid biosynthesis; L-arginine biosynthesis; N(2)-acetyl-L-ornithine from L-glutamate: step 3/4. Its function is as follows. Catalyzes the NADPH-dependent reduction of N-acetyl-5-glutamyl phosphate to yield N-acetyl-L-glutamate 5-semialdehyde. This chain is N-acetyl-gamma-glutamyl-phosphate reductase, found in Mycobacterium avium (strain 104).